The following is a 282-amino-acid chain: HTH-type transcriptional activator RhaR (282 aa).

One can recognise an HTH araC/xylS-type domain in the interval 179-277; that stretch reads DKLITRLAAS…GMTPSQWRHL (99 aa). DNA-binding regions (H-T-H motif) lie at residues 196 to 217 and 244 to 267; these read DKFCDEASCSERVLRQQFRQQT and ISDISTECGFEDSNYFSVVFTRET.

Binds DNA as a dimer.

It is found in the cytoplasm. Activates expression of the rhaSR operon in response to L-rhamnose. This Escherichia coli (strain K12 / MC4100 / BW2952) protein is HTH-type transcriptional activator RhaR.